We begin with the raw amino-acid sequence, 711 residues long: Putative membrane protein IgaA homolog (711 aa).

A topological domain (periplasmic) is located at residue methionine 1. A helical transmembrane segment spans residues serine 2–isoleucine 22. The Cytoplasmic segment spans residues lysine 23–arginine 204. Transmembrane regions (helical) follow at residues glutamate 205 to valine 225 and phenylalanine 226 to phenylalanine 246. At alanine 247 to arginine 339 the chain is on the cytoplasmic side. The chain crosses the membrane as a helical span at residues serine 340–leucine 360. Residues aspartate 361 to tyrosine 655 are Periplasmic-facing. A helical transmembrane segment spans residues leucine 656–alanine 676. Topologically, residues tryptophan 677–glutamate 711 are cytoplasmic.

This sequence belongs to the IgaA family.

It localises to the cell inner membrane. The protein is Putative membrane protein IgaA homolog (yrfF) of Escherichia coli (strain K12).